A 202-amino-acid polypeptide reads, in one-letter code: Holliday junction resolvase RecU (202 aa).

4 residues coordinate Mg(2+): Thr-85, Asp-87, Glu-100, and Gln-119.

The protein belongs to the RecU family. The cofactor is Mg(2+).

It is found in the cytoplasm. The enzyme catalyses Endonucleolytic cleavage at a junction such as a reciprocal single-stranded crossover between two homologous DNA duplexes (Holliday junction).. Its function is as follows. Endonuclease that resolves Holliday junction intermediates in genetic recombination. Cleaves mobile four-strand junctions by introducing symmetrical nicks in paired strands. Promotes annealing of linear ssDNA with homologous dsDNA. Required for DNA repair, homologous recombination and chromosome segregation. The sequence is that of Holliday junction resolvase RecU from Streptococcus equi subsp. zooepidemicus (strain H70).